The chain runs to 89 residues: Small ribosomal subunit protein uS15 (89 aa).

It belongs to the universal ribosomal protein uS15 family. In terms of assembly, part of the 30S ribosomal subunit. Forms a bridge to the 50S subunit in the 70S ribosome, contacting the 23S rRNA.

One of the primary rRNA binding proteins, it binds directly to 16S rRNA where it helps nucleate assembly of the platform of the 30S subunit by binding and bridging several RNA helices of the 16S rRNA. In terms of biological role, forms an intersubunit bridge (bridge B4) with the 23S rRNA of the 50S subunit in the ribosome. In Chloroflexus aurantiacus (strain ATCC 29366 / DSM 635 / J-10-fl), this protein is Small ribosomal subunit protein uS15.